A 340-amino-acid polypeptide reads, in one-letter code: L-threonine 3-dehydrogenase (340 aa).

Cys38 contributes to the Zn(2+) binding site. Catalysis depends on charge relay system residues Thr40 and His43. Zn(2+) contacts are provided by His63, Glu64, Cys93, Cys96, Cys99, and Cys107. NAD(+)-binding positions include Ile175, Asp195, Arg200, 261–263, and 285–286; these read LGI and IY.

The protein belongs to the zinc-containing alcohol dehydrogenase family. In terms of assembly, homotetramer. Zn(2+) serves as cofactor.

Its subcellular location is the cytoplasm. It catalyses the reaction L-threonine + NAD(+) = (2S)-2-amino-3-oxobutanoate + NADH + H(+). The protein operates within amino-acid degradation; L-threonine degradation via oxydo-reductase pathway; glycine from L-threonine: step 1/2. Functionally, catalyzes the NAD(+)-dependent oxidation of L-threonine to 2-amino-3-ketobutyrate. This chain is L-threonine 3-dehydrogenase, found in Xanthomonas euvesicatoria pv. vesicatoria (strain 85-10) (Xanthomonas campestris pv. vesicatoria).